A 211-amino-acid polypeptide reads, in one-letter code: Probable calcium-binding protein CML11 (211 aa).

Disordered stretches follow at residues 1-22 (MSEP…AAAT) and 40-60 (SCSA…LGDD). A compositionally biased stretch (low complexity) spans 44–53 (QQQQQQQQQQ). EF-hand domains lie at 60–95 (DQLG…LGLK), 96–131 (PSTD…ELLY), 136–171 (YSED…LGHA), and 172–207 (LTVK…AAFD). Ca(2+) is bound by residues D73, N75, D77, S79, E84, D109, N111, N113, E120, D149, D151, N153, E160, D185, D187, D189, R191, and E196.

In terms of biological role, potential calcium sensor. This is Probable calcium-binding protein CML11 (CML11) from Oryza sativa subsp. japonica (Rice).